Here is a 306-residue protein sequence, read N- to C-terminus: MLIRHAPDLTDNDVTGHGLYLRRRDFIGGAAGLGLMAAAGSASARGLTYGPGFSTTEAPTPKKDITSYNNFYEFGVNKEDPSENAGSLKTRPWTVRVDGECEKPATFAIDDLIKGNKLEERIYRMRCVEGWSMVIPWVGFPLKDLIAQVKPTSKAKFVAFETLMRPSEMPGQRWDTLQWPYREGLRIDEAVHPLAILAVGLYGDVLPNQNGAPLRLVVPWKYGFKGIKSIVRISLVETMPATAWNVLAPREYGFYSNVNPAVDHPRWSQATERRIGEFRRRETLPFNGYGQYVADLYRGMDLKRNF.

The tat-type signal signal peptide spans 1 to 44; the sequence is MLIRHAPDLTDNDVTGHGLYLRRRDFIGGAAGLGLMAAAGSASA. Mo-molybdopterin contacts are provided by residues Asn69, 72–73, Cys127, Thr162, Asn210, Arg215, and 226–228; these read YE and GIK.

The protein belongs to the MsrP family. In terms of assembly, heterodimer of a catalytic subunit (MsrP) and a heme-binding subunit (MsrQ). Requires Mo-molybdopterin as cofactor. Predicted to be exported by the Tat system. The position of the signal peptide cleavage has not been experimentally proven.

It is found in the periplasm. It catalyses the reaction L-methionyl-[protein] + a quinone + H2O = L-methionyl-(S)-S-oxide-[protein] + a quinol. The catalysed reaction is L-methionyl-[protein] + a quinone + H2O = L-methionyl-(R)-S-oxide-[protein] + a quinol. Functionally, part of the MsrPQ system that repairs oxidized periplasmic proteins containing methionine sulfoxide residues (Met-O), using respiratory chain electrons. Thus protects these proteins from oxidative-stress damage caused by reactive species of oxygen and chlorine generated by the host defense mechanisms. MsrPQ is essential for the maintenance of envelope integrity under bleach stress, rescuing a wide series of structurally unrelated periplasmic proteins from methionine oxidation. The catalytic subunit MsrP is non-stereospecific, being able to reduce both (R-) and (S-) diastereoisomers of methionine sulfoxide. In Caulobacter sp. (strain K31), this protein is Protein-methionine-sulfoxide reductase catalytic subunit MsrP.